Here is a 342-residue protein sequence, read N- to C-terminus: Heat-inducible transcription repressor HrcA (342 aa).

It belongs to the HrcA family.

Functionally, negative regulator of class I heat shock genes (grpE-dnaK-dnaJ and groELS operons). Prevents heat-shock induction of these operons. The sequence is that of Heat-inducible transcription repressor HrcA from Onion yellows phytoplasma (strain OY-M).